The primary structure comprises 296 residues: Large ribosomal subunit protein uL18A (296 aa).

Positions 251-296 are disordered; it reads PVHEKKPKKEVKKKRWNRAKLSLEQKKDRVAQKKASFLRAQEKADS. Residues 255–268 show a composition bias toward basic residues; that stretch reads KKPKKEVKKKRWNR. Positions 271-281 are enriched in basic and acidic residues; sequence LSLEQKKDRVA.

It belongs to the universal ribosomal protein uL18 family. Component of the large ribosomal subunit (LSU). Part of a LSU subcomplex, the 5S RNP which is composed of the 5S RNA, RPL5 and RPL11.

Its subcellular location is the cytoplasm. The protein localises to the nucleus. The protein resides in the nucleolus. In terms of biological role, component of the ribosome, a large ribonucleoprotein complex responsible for the synthesis of proteins in the cell. The small ribosomal subunit (SSU) binds messenger RNAs (mRNAs) and translates the encoded message by selecting cognate aminoacyl-transfer RNA (tRNA) molecules. The large subunit (LSU) contains the ribosomal catalytic site termed the peptidyl transferase center (PTC), which catalyzes the formation of peptide bonds, thereby polymerizing the amino acids delivered by tRNAs into a polypeptide chain. The nascent polypeptides leave the ribosome through a tunnel in the LSU and interact with protein factors that function in enzymatic processing, targeting, and the membrane insertion of nascent chains at the exit of the ribosomal tunnel. As part of the 5S RNP/5S ribonucleoprotein particle it is an essential component of the LSU, required for its formation and the maturation of rRNAs. It also couples ribosome biogenesis to p53/TP53 activation. As part of the 5S RNP it accumulates in the nucleoplasm and inhibits MDM2, when ribosome biogenesis is perturbed, mediating the stabilization and the activation of TP53. The protein is Large ribosomal subunit protein uL18A (rpl5-a) of Xenopus laevis (African clawed frog).